We begin with the raw amino-acid sequence, 68 residues long: Large ribosomal subunit protein eL24 (68 aa).

4 residues coordinate Zn(2+): Cys-7, Cys-10, Cys-33, and Cys-37. Residues 7 to 37 (CDFCGRIIEPGTGKMFVKNDGTILWFCSSKC) form a C4-type zinc finger.

Belongs to the eukaryotic ribosomal protein eL24 family. In terms of assembly, part of the 50S ribosomal subunit. Forms a cluster with proteins L3 and L14. The cofactor is Zn(2+).

Binds to the 23S rRNA. The polypeptide is Large ribosomal subunit protein eL24 (Methanopyrus kandleri (strain AV19 / DSM 6324 / JCM 9639 / NBRC 100938)).